The primary structure comprises 391 residues: Tumor susceptibility gene 101 protein (391 aa).

An N-acetylalanine modification is found at Ala-2. A UEV domain is found at 2-145; that stretch reads AVSESQLKKM…GEEPPVFSRP (144 aa). The tract at residues 159 to 163 is interaction with CEP55; it reads PPNTS. Positions 197–220 are disordered; the sequence is YPATTSSQYPSQPPVTTVGPSRDG. The span at 200–215 shows a compositional bias: polar residues; the sequence is TTSSQYPSQPPVTTVG. Thr-221 is modified (phosphothreonine). The stretch at 237–317 forms a coiled coil; that stretch reads DKLRWRMKEE…NQSENNDIDE (81 aa). Positions 321–324 match the PTAP/PSAP motif motif; the sequence is PTAP. The 69-residue stretch at 323-391 folds into the SB domain; it reads APLYKQILNL…RKTAGLSDLY (69 aa).

Belongs to the ubiquitin-conjugating enzyme family. UEV subfamily. As to quaternary structure, component of the ESCRT-I complex (endosomal sorting complex required for transport I) which consists of TSG101, VPS28, a VPS37 protein (VPS37A to -D) and MVB12A or MVB12B in a 1:1:1:1 stoichiometry. Interacts with VPS37A, VPS37B and VPS37C. Component of an ESCRT-I complex (endosomal sorting complex required for transport I) which consists of TSG101, VPS28, VPS37A and UBAP1 in a 1:1:1:1 stoichiometry. Interacts with DMAP1. Interacts with GMCL. Interacts with ubiquitin, stathmin and AATF. Interacts with HGS; the interaction mediates the association with the ESCRT-0 complex. Interacts with GGA1 and GGA3. Interacts (via UEV domain) with PDCD6IP/AIP1. Interacts with VPS28, SNF8 and VPS36. Self-associates. Interacts with MVB12A; the association appears to be mediated by the TSG101-VPS37 binary subcomplex. Interacts with VPS37D. Interacts with LRSAM1. Interacts with CEP55; the interaction is required for cytokinesis. Interacts with PDCD6. Interacts with LITAF. Interacts with murine leukemia virus Gag polyprotein (via PSAP motif). Interacts with MGRN1. Interacts with ARRDC1; recruits TSG101 to the plasma membrane. Post-translationally, monoubiquitinated at multiple sites by LRSAM1 and by MGRN1. Ubiquitination inactivates it, possibly by regulating its shuttling between an active membrane-bound protein and an inactive soluble form. Ubiquitination by MGRN1 requires the presence of UBE2D1. As to expression, ubiquitous. Higher expression in brain and mammary gland. Lower expression in liver and tumoral tissues.

The protein localises to the cytoplasm. The protein resides in the early endosome membrane. It is found in the late endosome membrane. It localises to the cytoskeleton. Its subcellular location is the microtubule organizing center. The protein localises to the centrosome. The protein resides in the midbody. It is found in the midbody ring. It localises to the nucleus. Functionally, component of the ESCRT-I complex, a regulator of vesicular trafficking process. Binds to ubiquitinated cargo proteins and is required for the sorting of endocytic ubiquitinated cargos into multivesicular bodies (MVBs). Mediates the association between the ESCRT-0 and ESCRT-I complex. Required for completion of cytokinesis; the function requires CEP55. May be involved in cell growth and differentiation. Acts as a negative growth regulator. Required for the exosomal release of SDCBP, CD63 and syndecan. It may also play a role in the extracellular release of microvesicles that differ from the exosomes. The protein is Tumor susceptibility gene 101 protein (Tsg101) of Mus musculus (Mouse).